The chain runs to 588 residues: Proteasome-associated ATPase (588 aa).

Residues 1–10 (MAAHDDDMNR) are compositionally biased toward basic and acidic residues. Residues 1–23 (MAAHDDDMNRGIRPGRGSDDPSG) are disordered. Residues 47–94 (RILEERIVELQTNLAGVSAQNERLANTLREARDQIVALKEEVDRLAQP) are a coiled coil. 276–281 (GCGKTL) is a binding site for ATP. The tract at residues 587–588 (YL) is docks into pockets in the proteasome alpha-ring.

It belongs to the AAA ATPase family. In terms of assembly, homohexamer. Assembles into a hexameric ring structure that caps the 20S proteasome core. Strongly interacts with the prokaryotic ubiquitin-like protein Pup through a hydrophobic interface; the interacting region of ARC lies in its N-terminal coiled-coil domain. There is one Pup binding site per ARC hexamer ring. Upon ATP-binding, the C-terminus of ARC interacts with the alpha-rings of the proteasome core, possibly by binding to the intersubunit pockets.

Its pathway is protein degradation; proteasomal Pup-dependent pathway. Functionally, ATPase which is responsible for recognizing, binding, unfolding and translocation of pupylated proteins into the bacterial 20S proteasome core particle. May be essential for opening the gate of the 20S proteasome via an interaction with its C-terminus, thereby allowing substrate entry and access to the site of proteolysis. Thus, the C-termini of the proteasomal ATPase may function like a 'key in a lock' to induce gate opening and therefore regulate proteolysis. This Streptomyces scabiei (strain 87.22) protein is Proteasome-associated ATPase.